Here is a 238-residue protein sequence, read N- to C-terminus: Cysteine-rich venom protein pseudechetoxin-like (238 aa).

The N-terminal stretch at 1–19 (MIAFTVLLSLAAVLQQSSG) is a signal peptide. A propeptide spanning residues 20-28 (TVDFASESS) is cleaved from the precursor. The 127-residue stretch at 38-164 (VDKHNDLRRS…STKYLYVCQY (127 aa)) folds into the SCP domain. Cystine bridges form between Cys75–Cys153, Cys92–Cys165, Cys148–Cys162, Cys184–Cys191, Cys187–Cys196, Cys200–Cys233, Cys209–Cys227, and Cys218–Cys231. Positions 200–233 (CKHNNDFSNCKALAKKSKCQTEWIKSKCPATCFC) constitute a ShKT domain.

It belongs to the CRISP family. As to expression, expressed by the venom gland.

It localises to the secreted. Its function is as follows. Blocks olfactory (CNGA2) and retinal (CNGA1) CNG channel currents. Does not affect neither depolarization- nor caffeine-induced contraction of smooth muscle. The sequence is that of Cysteine-rich venom protein pseudechetoxin-like from Oxyuranus scutellatus scutellatus (Australian taipan).